A 160-amino-acid polypeptide reads, in one-letter code: Small ribosomal subunit protein uS7 (160 aa).

It belongs to the universal ribosomal protein uS7 family. Part of the 30S ribosomal subunit. Contacts proteins S9 and S11.

In terms of biological role, one of the primary rRNA binding proteins, it binds directly to 16S rRNA where it nucleates assembly of the head domain of the 30S subunit. Is located at the subunit interface close to the decoding center, probably blocks exit of the E-site tRNA. This chain is Small ribosomal subunit protein uS7, found in Hydrogenobaculum sp. (strain Y04AAS1).